We begin with the raw amino-acid sequence, 263 residues long: Chromosomal replication initiator protein DnaA (263 aa).

Position 1 (aspartate 1) is a region of interest, domain I, interacts with DnaA modulators. Aspartate 1 is a region of interest (domain II). Residues 1-177 (DSGLGKTHLL…GIINKIEFSI (177 aa)) are domain III, AAA+ region. ATP contacts are provided by glycine 3, glycine 5, lysine 6, and threonine 7. The tract at residues 178–263 (IQDNSAAPKI…KNYSEIGVAF (86 aa)) is domain IV, binds dsDNA.

Belongs to the DnaA family. Oligomerizes as a right-handed, spiral filament on DNA at oriC.

Its subcellular location is the cytoplasm. Plays an essential role in the initiation and regulation of chromosomal replication. ATP-DnaA binds to the origin of replication (oriC) to initiate formation of the DNA replication initiation complex once per cell cycle. Binds the DnaA box (a 9 base pair repeat at the origin) and separates the double-stranded (ds)DNA. Forms a right-handed helical filament on oriC DNA; dsDNA binds to the exterior of the filament while single-stranded (ss)DNA is stabiized in the filament's interior. The ATP-DnaA-oriC complex binds and stabilizes one strand of the AT-rich DNA unwinding element (DUE), permitting loading of DNA polymerase. After initiation quickly degrades to an ADP-DnaA complex that is not apt for DNA replication. Binds acidic phospholipids. This is Chromosomal replication initiator protein DnaA from Spiroplasma apis.